The following is a 398-amino-acid chain: Metal tolerance protein 1 (398 aa).

Residues 1-56 lie on the Cytoplasmic side of the membrane; it reads MESSSPHHSHIVEVNVGKSDEERIIVASKVCGEAPCGFSDSKNASGDAHERSASMR. Residues 57–77 form a helical membrane-spanning segment; it reads KLCIAVVLCLVFMSVEVVGGI. At 78 to 89 the chain is on the vacuolar side; it reads KANSLAILTDAA. The helical transmembrane segment at 90-110 threads the bilayer; sequence HLLSDVAAFAISLFSLWAAGW. At 111 to 122 the chain is on the cytoplasmic side; sequence EATPRQTYGFFR. Residues 123 to 143 form a helical membrane-spanning segment; it reads IEILGALVSIQLIWLLTGILV. At 144 to 159 the chain is on the vacuolar side; sequence YEAIIRIVTETSEVNG. A helical transmembrane segment spans residues 160–180; the sequence is FLMFLVAAFGLVVNIIMAVLL. Residues 181-263 lie on the Cytoplasmic side of the membrane; that stretch reads GHDHGHSHGH…KRNINLQGAY (83 aa). The interval 182 to 232 is required for zinc-binding; that stretch reads HDHGHSHGHGHGHGHDHHNHSHGVTVTTHHHHHDHEHGHSHGHGEDKHHAH. The tract at residues 186 to 232 is disordered; it reads HSHGHGHGHGHDHHNHSHGVTVTTHHHHHDHEHGHSHGHGEDKHHAH. The segment covering 187–202 has biased composition (basic residues); that stretch reads SHGHGHGHGHDHHNHS. The span at 216-232 shows a compositional bias: basic and acidic residues; it reads HEHGHSHGHGEDKHHAH. Residues 264–284 traverse the membrane as a helical segment; sequence LHVLGDSIQSVGVMIGGAIIW. Residues 285 to 290 are Vacuolar-facing; sequence YNPEWK. A helical transmembrane segment spans residues 291–311; it reads IVDLICTLAFSVIVLGTTINM. The Cytoplasmic segment spans residues 312-398; it reads IRNILEVLME…ISHVTIQIER (87 aa).

Belongs to the cation diffusion facilitator (CDF) transporter (TC 2.A.4) family. SLC30A subfamily. As to expression, ubiquitously expressed at low levels.

It localises to the vacuole membrane. Its function is as follows. Mediates zinc accumulation in roots and confers resistance to zinc. Involved in sequestration of excess zinc in the cytoplasm into vacuoles to maintain zinc homeostasis. Can also transport cadmium with a low efficiency. The chain is Metal tolerance protein 1 from Arabidopsis thaliana (Mouse-ear cress).